We begin with the raw amino-acid sequence, 464 residues long: RCC1-like G exchanging factor-like protein (464 aa).

The N-terminal 37 residues, 1–37 (MALVALVAGARLGRRLSGPGLGRGHWTAAGRSRSRRE), are a transit peptide targeting the mitochondrion. RCC1 repeat units lie at residues 58-124 (ADRV…LSSK), 128-191 (VTKV…VLTD), 193-247 (EGVF…FLTD), 248-300 (KGEV…AVSA), 302-353 (GGLF…VLNG), 354-411 (EGHV…ALTN), and 412-461 (KGEL…TLAK).

As to quaternary structure, forms a regulatory protein-RNA complex, consisting of RCC1L, NGRN, RPUSD3, RPUSD4, TRUB2, FASTKD2 and 16S mt-rRNA. Interacts with 16S mt-rRNA; this interaction is direct. Interacts with OPA1; this interaction is direct. In terms of assembly, asociates with the mitochondrial ribosome large subunit (mt-LSU). Asociates with the mitochondrial ribosome small subunit (mt-SSU). As to expression, ubiquitous.

It localises to the mitochondrion membrane. Its subcellular location is the mitochondrion inner membrane. Its function is as follows. Guanine nucleotide exchange factor (GEF) for mitochondrial dynamin-related GTPase OPA1. Activates OPA1, by exchanging bound GDP for free GTP, and drives OPA1 and MFN1-dependent mitochondrial fusion. Plays an essential role in mitochondrial ribosome biogenesis. As a component of a functional protein-RNA module, consisting of RCC1L, NGRN, RPUSD3, RPUSD4, TRUB2, FASTKD2 and 16S mitochondrial ribosomal RNA (16S mt-rRNA), controls 16S mt-rRNA abundance and is required for intra-mitochondrial translation of core subunits of the oxidative phosphorylation system. Functionally, plays an essential role in mitochondrial ribosome biogenesis via its association with GTPases that play a role in the assembly of the large ribosome subunit. Plays an essential role in mitochondrial ribosome biogenesis via its association with GTPases that play a role in the assembly of the small ribosome subunit. The chain is RCC1-like G exchanging factor-like protein from Homo sapiens (Human).